The primary structure comprises 306 residues: Ornithine carbamoyltransferase (306 aa).

Residues 53–56, Gln-80, Arg-104, and 131–134 each bind carbamoyl phosphate; these read STRT and HPCQ. L-ornithine is bound by residues Asn-162, Asp-219, and 223–224; that span reads SM. Carbamoyl phosphate-binding positions include 259-260 and Arg-287; that span reads CL.

This sequence belongs to the aspartate/ornithine carbamoyltransferase superfamily. OTCase family.

The protein localises to the cytoplasm. The catalysed reaction is carbamoyl phosphate + L-ornithine = L-citrulline + phosphate + H(+). It functions in the pathway amino-acid degradation; L-arginine degradation via ADI pathway; carbamoyl phosphate from L-arginine: step 2/2. In terms of biological role, reversibly catalyzes the transfer of the carbamoyl group from carbamoyl phosphate (CP) to the N(epsilon) atom of ornithine (ORN) to produce L-citrulline. The sequence is that of Ornithine carbamoyltransferase from Acinetobacter baumannii (strain AYE).